Consider the following 292-residue polypeptide: Phosphatidylserine decarboxylase proenzyme (292 aa).

Catalysis depends on charge relay system; for autoendoproteolytic cleavage activity residues aspartate 92, histidine 149, and serine 256. Catalysis depends on serine 256, which acts as the Schiff-base intermediate with substrate; via pyruvic acid; for decarboxylase activity. Serine 256 carries the pyruvic acid (Ser); by autocatalysis modification.

The protein belongs to the phosphatidylserine decarboxylase family. PSD-B subfamily. Prokaryotic type I sub-subfamily. Heterodimer of a large membrane-associated beta subunit and a small pyruvoyl-containing alpha subunit. It depends on pyruvate as a cofactor. In terms of processing, is synthesized initially as an inactive proenzyme. Formation of the active enzyme involves a self-maturation process in which the active site pyruvoyl group is generated from an internal serine residue via an autocatalytic post-translational modification. Two non-identical subunits are generated from the proenzyme in this reaction, and the pyruvate is formed at the N-terminus of the alpha chain, which is derived from the carboxyl end of the proenzyme. The autoendoproteolytic cleavage occurs by a canonical serine protease mechanism, in which the side chain hydroxyl group of the serine supplies its oxygen atom to form the C-terminus of the beta chain, while the remainder of the serine residue undergoes an oxidative deamination to produce ammonia and the pyruvoyl prosthetic group on the alpha chain. During this reaction, the Ser that is part of the protease active site of the proenzyme becomes the pyruvoyl prosthetic group, which constitutes an essential element of the active site of the mature decarboxylase.

It is found in the cell membrane. The enzyme catalyses a 1,2-diacyl-sn-glycero-3-phospho-L-serine + H(+) = a 1,2-diacyl-sn-glycero-3-phosphoethanolamine + CO2. It functions in the pathway phospholipid metabolism; phosphatidylethanolamine biosynthesis; phosphatidylethanolamine from CDP-diacylglycerol: step 2/2. In terms of biological role, catalyzes the formation of phosphatidylethanolamine (PtdEtn) from phosphatidylserine (PtdSer). The protein is Phosphatidylserine decarboxylase proenzyme of Baumannia cicadellinicola subsp. Homalodisca coagulata.